Reading from the N-terminus, the 144-residue chain is Small ribosomal subunit protein eS19B (144 aa).

Belongs to the eukaryotic ribosomal protein eS19 family. Component of the small ribosomal subunit (SSU). Mature yeast ribosomes consist of a small (40S) and a large (60S) subunit. The 40S small subunit contains 1 molecule of ribosomal RNA (18S rRNA) and 33 different proteins (encoded by 57 genes). The large 60S subunit contains 3 rRNA molecules (25S, 5.8S and 5S rRNA) and 46 different proteins (encoded by 81 genes).

The protein resides in the cytoplasm. In terms of biological role, component of the ribosome, a large ribonucleoprotein complex responsible for the synthesis of proteins in the cell. The small ribosomal subunit (SSU) binds messenger RNAs (mRNAs) and translates the encoded message by selecting cognate aminoacyl-transfer RNA (tRNA) molecules. The large subunit (LSU) contains the ribosomal catalytic site termed the peptidyl transferase center (PTC), which catalyzes the formation of peptide bonds, thereby polymerizing the amino acids delivered by tRNAs into a polypeptide chain. The nascent polypeptides leave the ribosome through a tunnel in the LSU and interact with protein factors that function in enzymatic processing, targeting, and the membrane insertion of nascent chains at the exit of the ribosomal tunnel. eS19 is required for proper maturation of the small (40S) ribosomal subunit. Binds to 40S pre-ribosomal particles, probably required after association of NOC4 but before association of ENP1, TSR1 and RIO2 with 20/21S pre-rRNA. Required for proper maturation of the small (40S) ribosomal subunit. Binds to 40s pre-ribosomal particles, probably required after association of NOC4 but before association of ENP1, TSR1 and RIO2 with 20/21S pre-rRNA. This Saccharomyces cerevisiae (strain ATCC 204508 / S288c) (Baker's yeast) protein is Small ribosomal subunit protein eS19B.